Reading from the N-terminus, the 335-residue chain is Nucleoid-associated protein PC1_1634 (335 aa).

This sequence belongs to the YejK family.

It is found in the cytoplasm. The protein resides in the nucleoid. The protein is Nucleoid-associated protein PC1_1634 of Pectobacterium carotovorum subsp. carotovorum (strain PC1).